Consider the following 237-residue polypeptide: MGQKINPIGFRLGINRTWDSRWFADNAEYGQLLHEDLKIRAYLMEELKSAGIAKVVIERPHKKCRVTIHSARPGLIIGKKGADIEKLRKKLSEMTNSETHLNIVEVRKPEVDATLVAQSIAQQLERRVAFRRAMKRAVQSAMRLGAEGIKITCAGRLGGAEIARTEWYREGRVPLHTLRADIDYGTAEAETAFGICGVKVWIFKGEILEHDPMASERRATESDNQGGSGRERRRENA.

A KH type-2 domain is found at 39 to 107 (IRAYLMEELK…ETHLNIVEVR (69 aa)). The segment at 213–237 (MASERRATESDNQGGSGRERRRENA) is disordered.

Belongs to the universal ribosomal protein uS3 family. Part of the 30S ribosomal subunit. Forms a tight complex with proteins S10 and S14.

Functionally, binds the lower part of the 30S subunit head. Binds mRNA in the 70S ribosome, positioning it for translation. This is Small ribosomal subunit protein uS3 from Rhizobium meliloti (strain 1021) (Ensifer meliloti).